Consider the following 217-residue polypeptide: Probable transaldolase (217 aa).

Residue Lys-83 is the Schiff-base intermediate with substrate of the active site.

This sequence belongs to the transaldolase family. Type 3B subfamily.

It is found in the cytoplasm. The catalysed reaction is D-sedoheptulose 7-phosphate + D-glyceraldehyde 3-phosphate = D-erythrose 4-phosphate + beta-D-fructose 6-phosphate. It participates in carbohydrate degradation; pentose phosphate pathway; D-glyceraldehyde 3-phosphate and beta-D-fructose 6-phosphate from D-ribose 5-phosphate and D-xylulose 5-phosphate (non-oxidative stage): step 2/3. In terms of biological role, transaldolase is important for the balance of metabolites in the pentose-phosphate pathway. This chain is Probable transaldolase, found in Erythrobacter litoralis (strain HTCC2594).